An 809-amino-acid chain; its full sequence is Eukaryotic translation initiation factor 3 subunit C (809 aa).

Positions 1–102 are disordered; it reads MSRFFAASYE…DSDESDEASK (102 aa). Composition is skewed to acidic residues over residues 18-30 and 37-59; these read SEED…EEEL and SEEE…DSDD. The region spanning 605 to 780 is the PCI domain; the sequence is FHEHINLDLI…SVLSIAKGAE (176 aa).

Belongs to the eIF-3 subunit C family. As to quaternary structure, component of the eukaryotic translation initiation factor 3 (eIF-3) complex.

The protein resides in the cytoplasm. Its function is as follows. Component of the eukaryotic translation initiation factor 3 (eIF-3) complex, which is involved in protein synthesis of a specialized repertoire of mRNAs and, together with other initiation factors, stimulates binding of mRNA and methionyl-tRNAi to the 40S ribosome. The eIF-3 complex specifically targets and initiates translation of a subset of mRNAs involved in cell proliferation. The chain is Eukaryotic translation initiation factor 3 subunit C from Vanderwaltozyma polyspora (strain ATCC 22028 / DSM 70294 / BCRC 21397 / CBS 2163 / NBRC 10782 / NRRL Y-8283 / UCD 57-17) (Kluyveromyces polysporus).